We begin with the raw amino-acid sequence, 445 residues long: Lipoyl synthase, mitochondrial (445 aa).

Residues 1–40 constitute a mitochondrion transit peptide; that stretch reads MRPGSWRVITHYGFTGPIQRLQAPLRRSLARAAALSTRSY. Over residues 42 to 71 the composition is skewed to low complexity; the sequence is TIPSAPSSQPTSQESSPAASASASASAPAT. The interval 42 to 77 is disordered; that stretch reads TIPSAPSSQPTSQESSPAASASASASAPATKPRPTY. Residues C157, C162, C168, C188, C192, C195, and S405 each contribute to the [4Fe-4S] cluster site. Residues 171 to 394 form the Radical SAM core domain; sequence GSNKAAATAT…RQRALDMGFL (224 aa).

It belongs to the radical SAM superfamily. Lipoyl synthase family. The cofactor is [4Fe-4S] cluster.

The protein localises to the mitochondrion. The enzyme catalyses [[Fe-S] cluster scaffold protein carrying a second [4Fe-4S](2+) cluster] + N(6)-octanoyl-L-lysyl-[protein] + 2 oxidized [2Fe-2S]-[ferredoxin] + 2 S-adenosyl-L-methionine + 4 H(+) = [[Fe-S] cluster scaffold protein] + N(6)-[(R)-dihydrolipoyl]-L-lysyl-[protein] + 4 Fe(3+) + 2 hydrogen sulfide + 2 5'-deoxyadenosine + 2 L-methionine + 2 reduced [2Fe-2S]-[ferredoxin]. The protein operates within protein modification; protein lipoylation via endogenous pathway; protein N(6)-(lipoyl)lysine from octanoyl-[acyl-carrier-protein]: step 2/2. Catalyzes the radical-mediated insertion of two sulfur atoms into the C-6 and C-8 positions of the octanoyl moiety bound to the lipoyl domains of lipoate-dependent enzymes, thereby converting the octanoylated domains into lipoylated derivatives. This Sordaria macrospora (strain ATCC MYA-333 / DSM 997 / K(L3346) / K-hell) protein is Lipoyl synthase, mitochondrial.